A 564-amino-acid polypeptide reads, in one-letter code: Pyranose 2-oxidase (564 aa).

A propeptide spanning residues 1–25 (MPIRLSKEKINDLLQRSQGDLTSSQ) is cleaved from the precursor. A Tele-8alpha-FAD histidine modification is found at histidine 158. Substrate-binding residues include glutamine 392 and histidine 394. Histidine 498 serves as the catalytic Proton acceptor. The active site involves asparagine 541.

This sequence belongs to the GMC oxidoreductase family. Homotetramer. FAD is required as a cofactor.

The catalysed reaction is D-glucose + O2 = 2-dehydro-D-glucose + H2O2. Its function is as follows. Catalyzes the oxidation of various aldopyranoses and disaccharides on carbon-2 to the corresponding 2-keto sugars concomitant with the reduction of O(2) to H(2)O(2). The preferred substrate is D-glucose which is converted to 2-dehydro-D-glucose. Acts also on D-xylose, L-sorbose, D-galactose and 1,5-anhydroglucitol, a diagnostic marker of diabetes mellitus. In Tricholoma matsutake (Matsutake mushroom), this protein is Pyranose 2-oxidase (p2ox).